Consider the following 244-residue polypeptide: Ribosomal RNA large subunit methyltransferase E (244 aa).

A disordered region spans residues 1–23 (MATGGKKSAGRTTGSGPAGGSRN). S-adenosyl-L-methionine is bound by residues G91, W93, D116, D132, and D156. K196 functions as the Proton acceptor in the catalytic mechanism.

This sequence belongs to the class I-like SAM-binding methyltransferase superfamily. RNA methyltransferase RlmE family.

The protein resides in the cytoplasm. It catalyses the reaction uridine(2552) in 23S rRNA + S-adenosyl-L-methionine = 2'-O-methyluridine(2552) in 23S rRNA + S-adenosyl-L-homocysteine + H(+). In terms of biological role, specifically methylates the uridine in position 2552 of 23S rRNA at the 2'-O position of the ribose in the fully assembled 50S ribosomal subunit. The polypeptide is Ribosomal RNA large subunit methyltransferase E (Paramagnetospirillum magneticum (strain ATCC 700264 / AMB-1) (Magnetospirillum magneticum)).